Reading from the N-terminus, the 255-residue chain is Type III pantothenate kinase (255 aa).

ATP is bound at residue 6 to 13 (DVGNTNIV). Residues tyrosine 100 and 107-110 (GADR) each bind substrate. Residue aspartate 109 is the Proton acceptor of the active site. Aspartate 129 serves as a coordination point for K(+). An ATP-binding site is contributed by threonine 132. Residue threonine 184 coordinates substrate.

This sequence belongs to the type III pantothenate kinase family. Homodimer. NH4(+) is required as a cofactor. The cofactor is K(+).

The protein resides in the cytoplasm. It catalyses the reaction (R)-pantothenate + ATP = (R)-4'-phosphopantothenate + ADP + H(+). Its pathway is cofactor biosynthesis; coenzyme A biosynthesis; CoA from (R)-pantothenate: step 1/5. Catalyzes the phosphorylation of pantothenate (Pan), the first step in CoA biosynthesis. The polypeptide is Type III pantothenate kinase (Caldanaerobacter subterraneus subsp. tengcongensis (strain DSM 15242 / JCM 11007 / NBRC 100824 / MB4) (Thermoanaerobacter tengcongensis)).